A 369-amino-acid polypeptide reads, in one-letter code: Protein HGH1 homolog (369 aa).

It belongs to the HGH1 family.

This chain is Protein HGH1 homolog, found in Drosophila melanogaster (Fruit fly).